A 316-amino-acid polypeptide reads, in one-letter code: Pantothenate kinase (316 aa).

96–103 (GSVAVGKS) contributes to the ATP binding site.

This sequence belongs to the prokaryotic pantothenate kinase family.

The protein resides in the cytoplasm. It carries out the reaction (R)-pantothenate + ATP = (R)-4'-phosphopantothenate + ADP + H(+). The protein operates within cofactor biosynthesis; coenzyme A biosynthesis; CoA from (R)-pantothenate: step 1/5. The sequence is that of Pantothenate kinase from Shouchella clausii (strain KSM-K16) (Alkalihalobacillus clausii).